The primary structure comprises 81 residues: ATP synthase subunit c, chloroplastic (81 aa).

Helical transmembrane passes span 3-23 and 57-77; these read PLISAASVIAAGLAVGLASIG and LAFMEALTIYGLVVALALLFA.

This sequence belongs to the ATPase C chain family. F-type ATPases have 2 components, F(1) - the catalytic core - and F(0) - the membrane proton channel. F(1) has five subunits: alpha(3), beta(3), gamma(1), delta(1), epsilon(1). F(0) has four main subunits: a(1), b(1), b'(1) and c(10-14). The alpha and beta chains form an alternating ring which encloses part of the gamma chain. F(1) is attached to F(0) by a central stalk formed by the gamma and epsilon chains, while a peripheral stalk is formed by the delta, b and b' chains.

It localises to the plastid. It is found in the chloroplast thylakoid membrane. F(1)F(0) ATP synthase produces ATP from ADP in the presence of a proton or sodium gradient. F-type ATPases consist of two structural domains, F(1) containing the extramembraneous catalytic core and F(0) containing the membrane proton channel, linked together by a central stalk and a peripheral stalk. During catalysis, ATP synthesis in the catalytic domain of F(1) is coupled via a rotary mechanism of the central stalk subunits to proton translocation. Functionally, key component of the F(0) channel; it plays a direct role in translocation across the membrane. A homomeric c-ring of between 10-14 subunits forms the central stalk rotor element with the F(1) delta and epsilon subunits. This Acorus calamus var. americanus (American sweet flag) protein is ATP synthase subunit c, chloroplastic.